Consider the following 317-residue polypeptide: Glycine--tRNA ligase alpha subunit (317 aa).

The protein belongs to the class-II aminoacyl-tRNA synthetase family. As to quaternary structure, tetramer of two alpha and two beta subunits.

The protein resides in the cytoplasm. It catalyses the reaction tRNA(Gly) + glycine + ATP = glycyl-tRNA(Gly) + AMP + diphosphate. The chain is Glycine--tRNA ligase alpha subunit from Lactococcus lactis subsp. cremoris (strain SK11).